We begin with the raw amino-acid sequence, 121 residues long: uncharacterized protein (121 aa).

3 helical membrane passes run 1-21 (MILW…IMPV), 55-75 (LKYI…FCSI), and 92-112 (LFFK…IHFL).

It is found in the membrane. This is an uncharacterized protein from Saccharomyces cerevisiae (strain ATCC 204508 / S288c) (Baker's yeast).